A 447-amino-acid polypeptide reads, in one-letter code: Phosphoglucosamine mutase (447 aa).

Residue S103 is the Phosphoserine intermediate of the active site. Residues S103, D242, D244, and D246 each coordinate Mg(2+). At S103 the chain carries Phosphoserine.

It belongs to the phosphohexose mutase family. Mg(2+) serves as cofactor. Activated by phosphorylation.

It catalyses the reaction alpha-D-glucosamine 1-phosphate = D-glucosamine 6-phosphate. In terms of biological role, catalyzes the conversion of glucosamine-6-phosphate to glucosamine-1-phosphate. The chain is Phosphoglucosamine mutase from Cereibacter sphaeroides (strain ATCC 17029 / ATH 2.4.9) (Rhodobacter sphaeroides).